Here is a 98-residue protein sequence, read N- to C-terminus: Hainantoxin-XVII-2 (98 aa).

Residues 1 to 40 form the signal peptide; sequence MTTVGVSLFRRSPEKITMKIATFLGLSFLLIASYVLICEA. Positions 41–64 are excised as a propeptide; that stretch reads QHPGFQELLILEENMRDPENSKER. 2 cysteine pairs are disulfide-bonded: Cys-66/Cys-81 and Cys-73/Cys-85.

The protein belongs to the hainantoxin family. 17 subfamily. Expressed by the venom gland.

The protein localises to the secreted. Putative ion channel inhibitor. The chain is Hainantoxin-XVII-2 from Cyriopagopus hainanus (Chinese bird spider).